Reading from the N-terminus, the 307-residue chain is MEPRIWLIAGPTASGKSALALRLAEASGAEIVNADSMQLYAGLRVLTAGPGPEETARAPHHLFGSVDPADGWSVGRWLRAASEVIADIRGRGRPVVVVGGTGLYFRALTQGLAEIPEVPADVRAKAAADFERMGEAAFRTRLAEVDPAAAARIAPGDRQRLCRAWEVFAATGQALSDLQRTGAPAIADWSAVALEPPRPALYARCDARLHAMVREGALEEVRALIARNLDPALPAMKAVGVREFAAHLRGETSLEAAVEAAQQETRRYAKRQITWMRGQMAGWPRLTADDHEGQWRQFLAQEPGLTP.

ATP is bound at residue Gly-10–Ser-17. Substrate is bound at residue Thr-12–Ser-17. 2 interaction with substrate tRNA regions span residues Asp-35 to Gln-38 and Gln-159 to Arg-163.

It belongs to the IPP transferase family. In terms of assembly, monomer. Mg(2+) serves as cofactor.

The catalysed reaction is adenosine(37) in tRNA + dimethylallyl diphosphate = N(6)-dimethylallyladenosine(37) in tRNA + diphosphate. Catalyzes the transfer of a dimethylallyl group onto the adenine at position 37 in tRNAs that read codons beginning with uridine, leading to the formation of N6-(dimethylallyl)adenosine (i(6)A). This Phenylobacterium zucineum (strain HLK1) protein is tRNA dimethylallyltransferase.